The following is a 178-amino-acid chain: Large ribosomal subunit protein uL6 (178 aa).

It belongs to the universal ribosomal protein uL6 family. As to quaternary structure, part of the 50S ribosomal subunit.

This protein binds to the 23S rRNA, and is important in its secondary structure. It is located near the subunit interface in the base of the L7/L12 stalk, and near the tRNA binding site of the peptidyltransferase center. This chain is Large ribosomal subunit protein uL6, found in Nitratiruptor sp. (strain SB155-2).